The sequence spans 37 residues: Large ribosomal subunit protein bL36c (37 aa).

Belongs to the bacterial ribosomal protein bL36 family.

It is found in the plastid. Its subcellular location is the chloroplast. In Thalassiosira pseudonana (Marine diatom), this protein is Large ribosomal subunit protein bL36c.